Reading from the N-terminus, the 64-residue chain is Large ribosomal subunit protein eL37 (64 aa).

Zn(2+)-binding residues include Cys-20, Cys-23, Cys-35, and Cys-38. The segment at 20-38 adopts a C4-type zinc-finger fold; the sequence is CRRCGRRAFHVRKKVCAAC.

The protein belongs to the eukaryotic ribosomal protein eL37 family. The cofactor is Zn(2+).

Binds to the 23S rRNA. The protein is Large ribosomal subunit protein eL37 of Methanococcus maripaludis (strain DSM 14266 / JCM 13030 / NBRC 101832 / S2 / LL).